Reading from the N-terminus, the 239-residue chain is tRNA (guanine-N(1)-)-methyltransferase (239 aa).

S-adenosyl-L-methionine is bound by residues Gly113 and 137–142 (LGDYVL).

This sequence belongs to the RNA methyltransferase TrmD family. As to quaternary structure, homodimer.

It is found in the cytoplasm. It catalyses the reaction guanosine(37) in tRNA + S-adenosyl-L-methionine = N(1)-methylguanosine(37) in tRNA + S-adenosyl-L-homocysteine + H(+). Specifically methylates guanosine-37 in various tRNAs. The polypeptide is tRNA (guanine-N(1)-)-methyltransferase (Cutibacterium acnes (strain DSM 16379 / KPA171202) (Propionibacterium acnes)).